The sequence spans 1889 residues: Protein TIC 214 (1889 aa).

6 consecutive transmembrane segments (helical) span residues L11–F31, F67–L87, G88–N108, L127–L147, V175–I195, and I224–I244. The segment covering P255–R265 has biased composition (acidic residues). Disordered regions lie at residues P255–E303 and S1610–Q1633. Over residues N279–F293 the composition is skewed to polar residues.

The protein belongs to the TIC214 family. As to quaternary structure, part of the Tic complex.

It is found in the plastid. The protein resides in the chloroplast inner membrane. Functionally, involved in protein precursor import into chloroplasts. May be part of an intermediate translocation complex acting as a protein-conducting channel at the inner envelope. This chain is Protein TIC 214, found in Gossypium barbadense (Sea Island cotton).